The primary structure comprises 232 residues: Large ribosomal subunit protein uL3 (232 aa).

This sequence belongs to the universal ribosomal protein uL3 family. In terms of assembly, part of the 50S ribosomal subunit. Forms a cluster with proteins L14 and L19.

One of the primary rRNA binding proteins, it binds directly near the 3'-end of the 23S rRNA, where it nucleates assembly of the 50S subunit. This chain is Large ribosomal subunit protein uL3, found in Hydrogenobaculum sp. (strain Y04AAS1).